A 1120-amino-acid polypeptide reads, in one-letter code: Hachiman protein HamB (1120 aa).

In terms of domain architecture, Helicase ATP-binding spans 278–452 (DGELLKNDGF…WIGEDDKAKR (175 aa)). 291–298 (MPTSSGKT) lines the ATP pocket. The short motif at 395–398 (DEGH) is the DEAH box element. The region spanning 521 to 710 (ATATKMLDVG…NIEKATSGLY (190 aa)) is the Helicase C-terminal domain.

It belongs to the helicase family.

In terms of biological role, component of antiviral defense system Hachiman, composed of HamA and HamB. Expression of Hachiman in B.subtilis (strain BEST7003) confers resistance to phages phi105, phi29, phi3T, rho14, SBSphiJ, SpBeta and SPR. Probably a helicase. This Bacillus cereus protein is Hachiman protein HamB.